Consider the following 153-residue polypeptide: ATP synthase subunit b' (153 aa).

Residues 20–40 (TLPLMAVQVVLLTFILNALFF) form a helical membrane-spanning segment.

The protein belongs to the ATPase B chain family. In terms of assembly, F-type ATPases have 2 components, F(1) - the catalytic core - and F(0) - the membrane proton channel. F(1) has five subunits: alpha(3), beta(3), gamma(1), delta(1), epsilon(1). F(0) has four main subunits: a(1), b(1), b'(1) and c(10-14). The alpha and beta chains form an alternating ring which encloses part of the gamma chain. F(1) is attached to F(0) by a central stalk formed by the gamma and epsilon chains, while a peripheral stalk is formed by the delta, b and b' chains.

The protein localises to the cellular thylakoid membrane. In terms of biological role, f(1)F(0) ATP synthase produces ATP from ADP in the presence of a proton or sodium gradient. F-type ATPases consist of two structural domains, F(1) containing the extramembraneous catalytic core and F(0) containing the membrane proton channel, linked together by a central stalk and a peripheral stalk. During catalysis, ATP synthesis in the catalytic domain of F(1) is coupled via a rotary mechanism of the central stalk subunits to proton translocation. Component of the F(0) channel, it forms part of the peripheral stalk, linking F(1) to F(0). The b'-subunit is a diverged and duplicated form of b found in plants and photosynthetic bacteria. The protein is ATP synthase subunit b' of Prochlorococcus marinus (strain NATL1A).